A 275-amino-acid polypeptide reads, in one-letter code: 3-methyl-2-oxobutanoate hydroxymethyltransferase (275 aa).

Mg(2+)-binding residues include Asp51 and Asp90. 3-methyl-2-oxobutanoate contacts are provided by residues 51–52, Asp90, and Lys120; that span reads DS. Residue Glu122 participates in Mg(2+) binding. Catalysis depends on Glu189, which acts as the Proton acceptor.

The protein belongs to the PanB family. Homodecamer; pentamer of dimers. The cofactor is Mg(2+).

It is found in the cytoplasm. The catalysed reaction is 3-methyl-2-oxobutanoate + (6R)-5,10-methylene-5,6,7,8-tetrahydrofolate + H2O = 2-dehydropantoate + (6S)-5,6,7,8-tetrahydrofolate. It participates in cofactor biosynthesis; (R)-pantothenate biosynthesis; (R)-pantoate from 3-methyl-2-oxobutanoate: step 1/2. Catalyzes the reversible reaction in which hydroxymethyl group from 5,10-methylenetetrahydrofolate is transferred onto alpha-ketoisovalerate to form ketopantoate. The protein is 3-methyl-2-oxobutanoate hydroxymethyltransferase of Caulobacter vibrioides (strain ATCC 19089 / CIP 103742 / CB 15) (Caulobacter crescentus).